Consider the following 205-residue polypeptide: Urease accessory protein UreG (205 aa).

Residue 10 to 17 coordinates GTP; sequence GPVGAGKT.

It belongs to the SIMIBI class G3E GTPase family. UreG subfamily. Homodimer. UreD, UreF and UreG form a complex that acts as a GTP-hydrolysis-dependent molecular chaperone, activating the urease apoprotein by helping to assemble the nickel containing metallocenter of UreC. The UreE protein probably delivers the nickel.

The protein resides in the cytoplasm. Its function is as follows. Facilitates the functional incorporation of the urease nickel metallocenter. This process requires GTP hydrolysis, probably effectuated by UreG. The chain is Urease accessory protein UreG from Corynebacterium glutamicum (strain R).